The primary structure comprises 537 residues: Tyrosine-protein kinase Fyn (537 aa).

G2 carries the N-myristoyl glycine lipid modification. S-palmitoyl cysteine attachment occurs at residues C3 and C6. Residue T12 is modified to Phosphothreonine; by PKC. The SH3 domain occupies 82 to 143 (TGVTLFVALY…PSNYVAPVDS (62 aa)). The 98-residue stretch at 149-246 (WYFGKLGRKD…GLCCRLVVPC (98 aa)) folds into the SH2 domain. Residues 271-524 (LQLIKRLGNG…YLQGFLEDYF (254 aa)) enclose the Protein kinase domain. Residues 277-285 (LGNGQFGEV) and K299 contribute to the ATP site. D390 (proton acceptor) is an active-site residue. A Phosphotyrosine; by autocatalysis modification is found at Y420. The residue at position 531 (Y531) is a Phosphotyrosine.

It belongs to the protein kinase superfamily. Tyr protein kinase family. SRC subfamily. In terms of assembly, associates through its SH3 domain, to the p85 subunit of phosphatidylinositol 3-kinase. It depends on Mn(2+) as a cofactor.

It catalyses the reaction L-tyrosyl-[protein] + ATP = O-phospho-L-tyrosyl-[protein] + ADP + H(+). Inhibited by phosphorylation of Tyr-531 by leukocyte common antigen and activated by dephosphorylation of this site. In terms of biological role, tyrosine-protein kinase implicated in the control of cell growth. Plays a role in the regulation of intracellular calcium levels. Required in brain development and mature brain function with important roles in the regulation of axon growth, axon guidance, and neurite extension. Blocks axon outgrowth and attraction induced by ntn1 by phosphorylating its receptor ddc. The chain is Tyrosine-protein kinase Fyn (fyn) from Xenopus laevis (African clawed frog).